A 183-amino-acid chain; its full sequence is MAPRTTRKDQFLERVVGINRVSKVGRRFSFTALVVVGDGDGTVGVGYGKAKEVPAAIQKAVEEAKKSFFRVPRVGSTIPHLVQGEDAAGVVLLRPASPGTAVIAGGPVRAVLECAGIHDVLSKSMGSVNAINIVRGTVEGLKKLKSPQAVAARRGKALDEIAPHAMLRTMENDRAQKSAKAGA.

Residues 11–71 (FLERVVGINR…EEAKKSFFRV (61 aa)) enclose the S5 DRBM domain.

The protein belongs to the universal ribosomal protein uS5 family. As to quaternary structure, part of the 30S ribosomal subunit. Contacts proteins S4 and S8.

With S4 and S12 plays an important role in translational accuracy. In terms of biological role, located at the back of the 30S subunit body where it stabilizes the conformation of the head with respect to the body. This is Small ribosomal subunit protein uS5 from Micrococcus luteus (Micrococcus lysodeikticus).